We begin with the raw amino-acid sequence, 342 residues long: Ferredoxin--NADP reductase (342 aa).

8 residues coordinate FAD: Cys-17, Asp-36, Gln-44, Tyr-49, Ile-89, Phe-124, Asp-289, and Thr-330.

Belongs to the ferredoxin--NADP reductase type 2 family. Homodimer. Requires FAD as cofactor.

The enzyme catalyses 2 reduced [2Fe-2S]-[ferredoxin] + NADP(+) + H(+) = 2 oxidized [2Fe-2S]-[ferredoxin] + NADPH. This chain is Ferredoxin--NADP reductase, found in Rhodopseudomonas palustris (strain BisB18).